The following is a 376-amino-acid chain: MSNKSVLLIAGEPSGDLLGAHLAQSLKSLEPNLKLAGMGGKRMREAGVEVFINADKLAVVGLLEILRQFRDIRHAMQTLKRYFKKTPPDLVVFIDYPGFNLHMAKQAKKAGIKVLYYVSPQIWAWRYGRIKKIKKYVDHMAVLFDFEEKLYQKENVPVSFVGHPLANAPTPSLSRNEICKQFNLDLDKPIVALFPGSREQEINKLLPMMVQAGKLIQTQIPTVQFILPLALNLALDKIRPFLSPEIKVIQNDISHVLAIAHAAVAASGTVTLEIALQQVPLVIIYKVAPLTFWLGKKLIRLSFIGLCNLVSPEPVAVELLQQDATPQAIADEVFQLLNNHNYRQSIIGKLGHLRPQLDRGNAAQNVAKVVHNLIFS.

This sequence belongs to the LpxB family.

The catalysed reaction is a lipid X + a UDP-2-N,3-O-bis[(3R)-3-hydroxyacyl]-alpha-D-glucosamine = a lipid A disaccharide + UDP + H(+). It functions in the pathway bacterial outer membrane biogenesis; LPS lipid A biosynthesis. In terms of biological role, condensation of UDP-2,3-diacylglucosamine and 2,3-diacylglucosamine-1-phosphate to form lipid A disaccharide, a precursor of lipid A, a phosphorylated glycolipid that anchors the lipopolysaccharide to the outer membrane of the cell. This chain is Lipid-A-disaccharide synthase, found in Coxiella burnetii (strain CbuK_Q154) (Coxiella burnetii (strain Q154)).